The following is a 735-amino-acid chain: ATP-dependent RNA helicase dbp4 (735 aa).

Residues 1–24 form a disordered region; the sequence is MPKNRTGRSREAREKKRKEEEEEI. Positions 8 to 19 are enriched in basic and acidic residues; it reads RSREAREKKRKE. A Q motif motif is present at residues 39-67; sequence DHFAELPLTQPTKSALKNAHFITLTEIQK. A Helicase ATP-binding domain is found at 70–244; it reads IPSALKGRDI…RLSLQNPDFI (175 aa). 83 to 90 is a binding site for ATP; the sequence is AKTGSGKT. A DEAD box motif is present at residues 192–195; the sequence is DEAD. The Helicase C-terminal domain occupies 270 to 424; the sequence is KLDILFGFIR…GKKTSIRNQL (155 aa). The interval 483 to 513 is disordered; that stretch reads GKLKNHSQSQKDYNSSTSLDSSEESEVDVEN. 4 positions are modified to phosphoserine: S500, S503, S504, and S545. Residues 652–712 form a disordered region; the sequence is KQLEKKRRRQ…DNDERDHGGI (61 aa). Positions 692 to 711 are enriched in basic and acidic residues; the sequence is ETSKKQKKWFEDNDERDHGG.

The protein belongs to the DEAD box helicase family. DDX10/DBP4 subfamily. As to quaternary structure, interacts with the U3 and U14 snoRNAs. Associates with pre-ribosomal complexes.

The protein localises to the nucleus. It localises to the nucleolus. It carries out the reaction ATP + H2O = ADP + phosphate + H(+). Its function is as follows. ATP-dependent RNA helicase required for ribosome biogenesis. Involved in the release of U14 snoRNA in pre-ribosomal complexes. Required for pre-rRNA cleavage at site A2. The chain is ATP-dependent RNA helicase dbp4 (dbp4) from Schizosaccharomyces pombe (strain 972 / ATCC 24843) (Fission yeast).